Consider the following 159-residue polypeptide: 4-deoxy-4-sulfo-D-erythrose isomerase (159 aa).

The active-site Proton acceptor is Cys66.

This sequence belongs to the LacAB/RpiB family.

The enzyme catalyses 4-deoxy-4-sulfo-D-erythrose = 4-deoxy-4-sulfo-D-erythrulose. Functionally, part of the sulfo-TK pathway, a D-sulfoquinovose degradation pathway that produces 2-hydroxyethane-1-sulfonate (isethionate). Catalyzes the isomerization of 4-deoxy-4-sulfo-D-erythrose (SE) to 4-deoxy-4-sulfo-D-erythrulose (SEu). This is 4-deoxy-4-sulfo-D-erythrose isomerase from Clostridium sp. (strain MSTE9).